The following is a 117-amino-acid chain: Ribosome-binding factor A (117 aa).

It belongs to the RbfA family. In terms of assembly, monomer. Binds 30S ribosomal subunits, but not 50S ribosomal subunits or 70S ribosomes.

The protein resides in the cytoplasm. Its function is as follows. One of several proteins that assist in the late maturation steps of the functional core of the 30S ribosomal subunit. Associates with free 30S ribosomal subunits (but not with 30S subunits that are part of 70S ribosomes or polysomes). Required for efficient processing of 16S rRNA. May interact with the 5'-terminal helix region of 16S rRNA. The sequence is that of Ribosome-binding factor A from Bacillus licheniformis (strain ATCC 14580 / DSM 13 / JCM 2505 / CCUG 7422 / NBRC 12200 / NCIMB 9375 / NCTC 10341 / NRRL NRS-1264 / Gibson 46).